A 603-amino-acid chain; its full sequence is Flavin-dependent halogenase chlA (603 aa).

Positions 16, 19, and 59 each coordinate FAD. Residues T352 and G353 each coordinate chloride.

The protein belongs to the flavin-dependent halogenase family.

The enzyme catalyses 2,4,6-trihydroxyphenylhexan-1-one + FADH2 + chloride + O2 = (3-chloro-2,4,6-trihydroxyphenyl)hexan-1-one + FAD + 2 H2O + H(+). The catalysed reaction is (3-chloro-2,4,6-trihydroxyphenyl)hexan-1-one + FADH2 + chloride + O2 = (3,5-dichloro-2,4,6-trihydroxyphenyl)hexan-1-one + FAD + 2 H2O. In terms of biological role, flavin-dependent halogenase; part of the gene cluster that mediates the biosynthesis of DIF-1 (Differentiation Inducing Factor-1), a signal molecule involved in the differentiation of pstO (prestalk-O) cells. The three-step process begins with the formation of (2,4,6-trihydroxyphenyl)-1-hexan-1-one (THPH) by the polyketide synthase StlB. THPH is then dichlorinated by the flavin-dependent halogenase ChlA. The last step of DIF-1 biosynthesis is the O-methylation of dichloro-THPH (or des-methyl-DIF-1) by the methyltransferase DmtA to yield DIF-1. In Dictyostelium discoideum (Social amoeba), this protein is Flavin-dependent halogenase chlA.